The sequence spans 456 residues: RuvB-like 1 (456 aa).

70–77 (GPPGTGKT) contributes to the ATP binding site.

Belongs to the RuvB family. Forms homohexameric rings. Can form a dodecamer with ruvbl2 made of two stacked hexameric rings. Is a component of the RNA polymerase II holoenzyme complex. Component of the chromatin-remodeling Ino80 complex. Component of some MLL1/MLL complex.

It is found in the nucleus. The protein resides in the dynein axonemal particle. It catalyses the reaction ATP + H2O = ADP + phosphate + H(+). Has single-stranded DNA-stimulated ATPase and ATP-dependent DNA helicase (3' to 5') activity suggesting a role in nuclear processes such as recombination and transcription. Proposed core component of the chromatin remodeling INO80 complex which exhibits DNA- and nucleosome-activated ATPase activity and catalyzes ATP-dependent nucleosome sliding. The sequence is that of RuvB-like 1 (ruvbl1) from Xenopus laevis (African clawed frog).